The chain runs to 370 residues: Cytochrome b (370 aa).

Helical transmembrane passes span 25–45 (FGSM…FLAI), 69–90 (WIMQ…YIHI), 105–125 (WLSG…GYVL), and 170–190 (FFAL…IHII). 2 residues coordinate heme b: His75 and His89. The heme b site is built by His174 and His188. His193 is a binding site for a ubiquinone. Helical transmembrane passes span 218–238 (YKDM…MSFT), 280–300 (LGGT…PFTH), 312–332 (LTQI…WTAT), and 339–358 (FISI…IINP).

It belongs to the cytochrome b family. As to quaternary structure, the cytochrome bc1 complex contains 3 respiratory subunits (MT-CYB, CYC1 and UQCRFS1), 2 core proteins (UQCRC1 and UQCRC2) and probably 6 low-molecular weight proteins. It depends on heme b as a cofactor.

Its subcellular location is the mitochondrion inner membrane. In terms of biological role, component of the ubiquinol-cytochrome c reductase complex (complex III or cytochrome b-c1 complex) that is part of the mitochondrial respiratory chain. The b-c1 complex mediates electron transfer from ubiquinol to cytochrome c. Contributes to the generation of a proton gradient across the mitochondrial membrane that is then used for ATP synthesis. The protein is Cytochrome b (MT-CYB) of Bungarus fasciatus (Banded krait).